The primary structure comprises 173 residues: Co-chaperone protein HscB homolog (173 aa).

The J domain maps to 5 to 77 (CHFALFELQP…AQRARYLLTI (73 aa)).

This sequence belongs to the HscB family. In terms of assembly, interacts with HscA and stimulates its ATPase activity.

Functionally, co-chaperone involved in the maturation of iron-sulfur cluster-containing proteins. Seems to help targeting proteins to be folded toward HscA. This is Co-chaperone protein HscB homolog from Pseudomonas fluorescens (strain Pf0-1).